An 84-amino-acid polypeptide reads, in one-letter code: Coiled-coil-helix-coiled-coil-helix domain-containing protein 7 (84 aa).

Residues 12-54 (SNPCLEETDASTKCMDENQYQKDLCTSYFIKYKNCRKFWNGIM) form the CHCH domain. Short sequence motifs (cx9C motif) lie at residues 15-25 (CLEETDASTKC) and 36-46 (CTSYFIKYKNC). 2 disulfides stabilise this stretch: Cys-15/Cys-46 and Cys-25/Cys-36.

Belongs to the CHCHD7 family.

The protein resides in the mitochondrion intermembrane space. This chain is Coiled-coil-helix-coiled-coil-helix domain-containing protein 7 (chchd7), found in Xenopus laevis (African clawed frog).